Here is a 159-residue protein sequence, read N- to C-terminus: 3-hydroxyacyl-[acyl-carrier-protein] dehydratase FabZ (159 aa).

His62 is an active-site residue.

The protein belongs to the thioester dehydratase family. FabZ subfamily.

The protein localises to the cytoplasm. It catalyses the reaction a (3R)-hydroxyacyl-[ACP] = a (2E)-enoyl-[ACP] + H2O. Functionally, involved in unsaturated fatty acids biosynthesis. Catalyzes the dehydration of short chain beta-hydroxyacyl-ACPs and long chain saturated and unsaturated beta-hydroxyacyl-ACPs. The sequence is that of 3-hydroxyacyl-[acyl-carrier-protein] dehydratase FabZ from Methylobacterium nodulans (strain LMG 21967 / CNCM I-2342 / ORS 2060).